The sequence spans 463 residues: Asparagine--tRNA ligase (463 aa).

Belongs to the class-II aminoacyl-tRNA synthetase family. Homodimer.

It is found in the cytoplasm. It catalyses the reaction tRNA(Asn) + L-asparagine + ATP = L-asparaginyl-tRNA(Asn) + AMP + diphosphate + H(+). This Bacillus cereus (strain ZK / E33L) protein is Asparagine--tRNA ligase.